Reading from the N-terminus, the 414-residue chain is MALISLAIDYKKSPIEVRSEFALSGLDVSMLYRSILAIDNVVHAVILSTCNRTEVYLEISDLRVVDDILVWWQGYVRNPNYKIKDYFKLRQGTEVIMHLMKLACGLESMVLGEPQILGQVKDSYTLSKKNHAIGKELDRVFQKVFATAKRVRSETRIGHCPVSVAFSAITLAKRQLDNISSKNVLIIGAGQTGELLFRHVTALAPKQIMLANRTIEKAQKITSAFRNASAHYLSELPQLIKKADIIIAAVNVLEYIVTCKYVGDKPRVFIDISIPQALDPKLGELEQNVYYCVDDINAVIEDNKDKRKYESSKAQKIIVKSLEEYLEKEKAIISNSAIKELFQKADGLVDLSLEKSLAKIRNGKDAEEIIKRFAYEIKKKVLHYPVVGMKEASKQGRSDCLVCMKRMFGLNVEK.

Residues 49-52 (TCNR), Ser-108, 113-115 (EPQ), and Gln-119 contribute to the substrate site. The active-site Nucleophile is Cys-50. Residue 188–193 (GAGQTG) participates in NADP(+) binding.

Belongs to the glutamyl-tRNA reductase family. In terms of assembly, homodimer.

The enzyme catalyses (S)-4-amino-5-oxopentanoate + tRNA(Glu) + NADP(+) = L-glutamyl-tRNA(Glu) + NADPH + H(+). It participates in porphyrin-containing compound metabolism; protoporphyrin-IX biosynthesis; 5-aminolevulinate from L-glutamyl-tRNA(Glu): step 1/2. In terms of biological role, catalyzes the NADPH-dependent reduction of glutamyl-tRNA(Glu) to glutamate 1-semialdehyde (GSA). The polypeptide is Glutamyl-tRNA reductase (Francisella tularensis subsp. tularensis (strain WY96-3418)).